Reading from the N-terminus, the 328-residue chain is Malate dehydrogenase (328 aa).

11–17 (GAAGQIG) contacts NAD(+). Residues Arg-92 and Arg-98 each coordinate substrate. Residues Asn-105, Gln-112, and 129 to 131 (VGN) each bind NAD(+). Asn-131 and Arg-162 together coordinate substrate. His-187 acts as the Proton acceptor in catalysis.

The protein belongs to the LDH/MDH superfamily. MDH type 2 family.

The enzyme catalyses (S)-malate + NAD(+) = oxaloacetate + NADH + H(+). Catalyzes the reversible oxidation of malate to oxaloacetate. The protein is Malate dehydrogenase of Coxiella burnetii (strain RSA 493 / Nine Mile phase I).